Consider the following 367-residue polypeptide: 2-aminoethylphosphonate--pyruvate transaminase (367 aa).

Lys-193 bears the N6-(pyridoxal phosphate)lysine mark.

Belongs to the class-V pyridoxal-phosphate-dependent aminotransferase family. PhnW subfamily. In terms of assembly, homodimer. Pyridoxal 5'-phosphate serves as cofactor.

It catalyses the reaction (2-aminoethyl)phosphonate + pyruvate = phosphonoacetaldehyde + L-alanine. In terms of biological role, involved in phosphonate degradation. The protein is 2-aminoethylphosphonate--pyruvate transaminase of Vibrio parahaemolyticus serotype O3:K6 (strain RIMD 2210633).